Reading from the N-terminus, the 432-residue chain is MTRLFMLVCLGIVCQGTTGNILRGESLNKSLPILHEWKFFDYDFGSDERRQDAILSGEYDYKNNYPSDIDQWHDKIFVTMLRYNGVPSSLNVISKKVGDGGPLLQPYPDWSFAKYDDCSGIVSASKLAIDKCDRLWVLDSGLVNNTQPMCSPKLLTFDLTTSQLLKQVEIPHDVAVNATTGKGRLSSLAVQSLDCNTNSDTMVYIADEKGEGLIVYHNSDDSFHRLTSNTFDYDPKFTKMTIDGESYTAQDGISGMALSPMTNNLYYSPVASTSLYYVNTEQFRTSDYQQNDIHYEGVQNILDTQSSAKVVSKSGVLFFGLVGDSALGCWNEHRTLERHNIRTVAQSDETLQMIASMKIKEALPHVPIFDRYINREYILVLSNKMQKMVNNDFNFDDVNFRIMNANVNELILNTRCENPDNDRTPFKISIHL.

The first 19 residues, 1-19 (MTRLFMLVCLGIVCQGTTG), serve as a signal peptide directing secretion. 3 N-linked (GlcNAc...) asparagine glycosylation sites follow: Asn-28, Asn-144, and Asn-177. Intrachain disulfides connect Cys-118/Cys-150, Cys-132/Cys-195, and Cys-329/Cys-416. Pro-364 contributes to the 24-methylenecholesterol binding site. Residue His-431 is modified to Histidine amide; atypical. Position 432 is a leucine amide; atypical (Leu-432).

Belongs to the major royal jelly protein family. Is present in royal jelly in different forms: monomer (55 kDa), oligomeric subunit (ca. 287-420 kDa), and water-insoluble aggregates in sediment after interaction with fatty acids. Component of the apisin heterooligomer complex consisting of 4 copies of MRJP1 and 4 copies of apisimin, associated with 8 molecules of 24-methylenecholesterol; apisimin forms a bridge connecting two MRJP1 dimers. At low pH multiple apisin octamers stack to form filaments that increase the viscosity of royal jelly; these filaments may be stabilized by bound fatty acid chains. The mandibular gland, where royal jelly is produced, has low pH conditions favouring filament formation, while the higher pH of the insect midgut favors filament disassembly. N-glycosylated on Asn-28, Asn-144 and Asn-177. Glycosylation is required to prevent apisin multimers from aggregating. In terms of processing, jellein-2 is probably processed to yield jellein-1 and jellein-4. Found in and secreted from the hypopharyngeal glands of the worker honey bee (at protein level); expression peaks at 12 days post eclosion. Expressed in the brains of worker bees (at protein level); found in antennal lobe, optical lobe and a subpopulation of Kenyon cells in the mushroom body. Found in the ommatidia of worker bees (at protein level). Expressed in the spermatheca of adult queen bees (at protein level); expression levels are higher in mated queens than in virgin queens. Expressed in queen bee ovaries and male drone testes.

It localises to the secreted. The protein localises to the cytoplasm. Its subcellular location is the cell projection. The protein resides in the rhabdomere. It is found in the cytoskeleton. Functionally, most abundant protein component of royal jelly, a substance produced in the hypopharyngeal gland containing proteins, free amino acids, fatty acids, sugars and other nutrients, which is fed to developing larvae by worker nurse bees. Major royal jelly proteins (Mrjps) are high in essential amino acids and probably have a nutritional function in larval food. All larvae are fed some royal jelly (also known as worker jelly) early in their development but it forms the principal source of nutrition for larvae destined to become queen bees. Induces the differentiation of honey bee larvae into queens through an Egfr-mediated signaling pathway. Promotes body size increase by activating p70 S6 kinase, stimulates ovary development by augmenting the titer of vitellogenin (Vg) and juvenile hormone, and reduces developmental time by increasing the activity of mitogen-activated protein kinase and inducing 20-hydroxyecdysone (ecdysterone, 20E) production. Together with apisimin forms the apisin complex that polymerizes at low pH, forming a fiber network and increasing the viscosity of royal jelly. The viscous royal Jelly placed in honeycomb cells containing larvae destined to become queens acts as both a food supply and an adhesive preventing larvae from falling out; queens are reared in special large cells oriented vertically. Produced in the spermatheca of adult queen bees, along with other major royal jelly proteins, where it may act as a nutrient supply for sperm stored by mated queens, or be involved in energy metabolism. Has antibacterial activity against the Gram-positive bacteria S.aureus ATCC 6535, S.saprophyticus and B.subtilis CCT2471, and the Gram-negative bacteria E.coli CCT1371, E.cloacae ATCC 23355, K.pneumoniae ATCC 13883 and P.aeruginosa ATCC 27853, and antifungal activity against C.albicans. Lack cytolytic activity and does not induce rat peritoneal mast cell degranulation. In terms of biological role, lacks antibacterial and antifungal activity. Lacks cytolytic activity and does not induce rat peritoneal mast cell degranulation. The protein is Major royal jelly protein 1 of Apis mellifera (Honeybee).